The sequence spans 412 residues: MVLKRKGLLIILDGLGDRPIKELNGLTPLEYANTPNMDKLAEIGILGQQDPIKPGQPAGSDTAHLSIFGYDPYETYRGRGFFEALGVGLDLSKDDLAFRVNFATLENGIITDRRAGRISTEEAHELARAIQEEVDIGVDFIFKGATGHRAVLVLKGMSRGYKVGDNDPHEAGKPPLKFSYEDEDSKKVAEILEEFVKKAQEVLEKHPINERRRKEGKPIANYLLIRGAGTYPNIPMKFTEQWKVKAAGVIAVALVKGVARAVGFDVYTPEGATGEYNTNEMAKAKKAVELLKDYDFVFLHFKPTDAAGHDNKPKLKAELIERADRMIGYILDHVDLEEVVIAITGDHSTPCEVMNHSGDPVPLLIAGGGVRTDDTKRFGEREAMKGGLGRIRGHDIVPIMMDLMNRSEKFGA.

It belongs to the BPG-independent phosphoglycerate mutase family. A-PGAM subfamily.

It carries out the reaction (2R)-2-phosphoglycerate = (2R)-3-phosphoglycerate. It participates in carbohydrate degradation; glycolysis; pyruvate from D-glyceraldehyde 3-phosphate: step 3/5. In terms of biological role, catalyzes the interconversion of 2-phosphoglycerate and 3-phosphoglycerate. This chain is 2,3-bisphosphoglycerate-independent phosphoglycerate mutase (apgM), found in Pyrococcus horikoshii (strain ATCC 700860 / DSM 12428 / JCM 9974 / NBRC 100139 / OT-3).